The chain runs to 335 residues: Trans-1,2-dihydrobenzene-1,2-diol dehydrogenase (335 aa).

Belongs to the Gfo/Idh/MocA family. In terms of assembly, homodimer. Liver, lens, spleen, kidney and small intestine.

The catalysed reaction is (1R,2R)-1,2-dihydrobenzene-1,2-diol + NADP(+) = catechol + NADPH + H(+). The enzyme catalyses D-xylose + NADP(+) = D-xylono-1,5-lactone + NADPH + H(+). Its activity is regulated as follows. Strongly inhibited by isoascorbic acid, 4-hydroxyacetophenone and chloromercuriphenylsulphonate. Stimulated by various salts. The polypeptide is Trans-1,2-dihydrobenzene-1,2-diol dehydrogenase (DHDH) (Sus scrofa (Pig)).